We begin with the raw amino-acid sequence, 198 residues long: FMN-dependent NADH:quinone oxidoreductase (198 aa).

FMN-binding positions include 92–95 (MWNL) and 136–139 (SRGG).

This sequence belongs to the azoreductase type 1 family. Homodimer. Requires FMN as cofactor.

It carries out the reaction 2 a quinone + NADH + H(+) = 2 a 1,4-benzosemiquinone + NAD(+). The enzyme catalyses N,N-dimethyl-1,4-phenylenediamine + anthranilate + 2 NAD(+) = 2-(4-dimethylaminophenyl)diazenylbenzoate + 2 NADH + 2 H(+). Functionally, quinone reductase that provides resistance to thiol-specific stress caused by electrophilic quinones. Also exhibits azoreductase activity. Catalyzes the reductive cleavage of the azo bond in aromatic azo compounds to the corresponding amines. The sequence is that of FMN-dependent NADH:quinone oxidoreductase from Clostridium perfringens (strain ATCC 13124 / DSM 756 / JCM 1290 / NCIMB 6125 / NCTC 8237 / Type A).